A 732-amino-acid chain; its full sequence is uncharacterized protein (732 aa).

Helical transmembrane passes span Tyr-687–Leu-707 and Gly-712–Ser-732.

It belongs to the FadG family.

The protein resides in the cell membrane. This is an uncharacterized protein from Bacillus subtilis (strain 168).